The chain runs to 522 residues: Zinc finger and BTB domain-containing protein 18 (522 aa).

The region spanning 24-91 (CDCTVLVGDA…MYEGKLQFKD (68 aa)) is the BTB domain. A compositionally biased stretch (basic and acidic residues) spans 121–143 (ATTEADSTKKEEDASSCSDKVES). Residues 121–165 (ATTEADSTKKEEDASSCSDKVESLSDGSSHMAGDLPSDEDEGEDE) form a disordered region. At S157 the chain carries Phosphoserine. A Glycyl lysine isopeptide (Lys-Gly) (interchain with G-Cter in SUMO2) cross-link involves residue K273. Residues 310–427 (EPAHLAPLRE…TFSCMYTLKR (118 aa)) are interaction with DNMT3A. 4 C2H2-type zinc fingers span residues 370–392 (FMCP…LSTH), 410–432 (PTCS…ERTH), 438–460 (YTCT…AVVH), and 466–489 (HACK…RKFH). Phosphoserine is present on residues S516 and S517.

It belongs to the krueppel C2H2-type zinc-finger protein family. ZBTB18 subfamily. In terms of assembly, interacts with DNMT3A.

It is found in the nucleus. Functionally, transcriptional repressor that plays a role in various developmental processes such as myogenesis and brain development. Specifically binds the consensus DNA sequence 5'-[AC]ACATCTG[GT][AC]-3' which contains the E box core, and acts by recruiting chromatin remodeling multiprotein complexes. Plays a key role in myogenesis by directly repressing the expression of ID2 and ID3, 2 inhibitors of skeletal myogenesis. Also involved in controlling cell division of progenitor cells and regulating the survival of postmitotic cortical neurons. May also play a role in the organization of chromosomes in the nucleus. The sequence is that of Zinc finger and BTB domain-containing protein 18 (ZBTB18) from Bos taurus (Bovine).